The following is a 132-amino-acid chain: Small ribosomal subunit protein uS8c (132 aa).

The protein belongs to the universal ribosomal protein uS8 family. Part of the 30S ribosomal subunit.

Its subcellular location is the plastid. It localises to the chloroplast. Its function is as follows. One of the primary rRNA binding proteins, it binds directly to 16S rRNA central domain where it helps coordinate assembly of the platform of the 30S subunit. This is Small ribosomal subunit protein uS8c (rps8) from Spirogyra maxima (Green alga).